We begin with the raw amino-acid sequence, 283 residues long: MNTVKTVRELRAAVTHARSAGKRIGFVPTMGNLHSGHATLVTKAAQQADFVVASIFVNPLQFGAGEDLDKYPRTLAADQEKLLQAGCNLLFAPTVEEMYPGGMTGQTRVSVPQLSEGLCGASRPGHFEGVATVVSKLFNMVQPDMAVFGQKDYQQLAVIRAMVHDLNMPIQIIGEPTVRADDGLALSSRNGYLTDEQRAIAPVLYRSLSQIGAAIKAGDHDFAKLRAEQVQQIEAAGLRLDYFEVRQGVHLRPATPEDRDIVILVAAYLGATRLIDNLHLTLD.

30–37 (MGNLHSGH) serves as a coordination point for ATP. Histidine 37 (proton donor) is an active-site residue. Glutamine 61 contacts (R)-pantoate. Glutamine 61 is a beta-alanine binding site. 149 to 152 (GQKD) is a binding site for ATP. Residue glutamine 155 coordinates (R)-pantoate. ATP-binding positions include valine 178 and 186 to 189 (LSSR).

The protein belongs to the pantothenate synthetase family. In terms of assembly, homodimer.

It localises to the cytoplasm. The catalysed reaction is (R)-pantoate + beta-alanine + ATP = (R)-pantothenate + AMP + diphosphate + H(+). It functions in the pathway cofactor biosynthesis; (R)-pantothenate biosynthesis; (R)-pantothenate from (R)-pantoate and beta-alanine: step 1/1. In terms of biological role, catalyzes the condensation of pantoate with beta-alanine in an ATP-dependent reaction via a pantoyl-adenylate intermediate. The polypeptide is Pantothenate synthetase (Pseudomonas fluorescens (strain SBW25)).